A 126-amino-acid chain; its full sequence is Cyclin-dependent kinase 2-associated protein 2 (126 aa).

The tract at residues 1 to 48 is disordered; that stretch reads MSYKPIAPAPSSTPGSSTPGPGTPVPTGSVPSPSGSVPGAGAPFRPLF. Residues 9 to 43 show a composition bias toward low complexity; that stretch reads APSSTPGSSTPGPGTPVPTGSVPSPSGSVPGAGAP. The interval 64–106 is interaction with CDK2; sequence PPGAQGSQSTYTDLLSVIEEMGKEIRPTYAGSKSAMERLKRGI.

It belongs to the CDK2AP family. In terms of assembly, component of the nucleosome remodeling and deacetylase (NuRD) repressor complex, composed of core proteins MTA1, MTA2, MTA3, RBBP4, RBBP7, HDAC1, HDAC2, MBD2, MBD3, and peripherally associated proteins CDK2AP1, CDK2AP2, GATAD2A, GATAD2B, CHD3, CHD4 and CHD5. The exact stoichiometry of the NuRD complex is unknown, and some subunits such as MBD2 and MBD3, GATAD2A and GATAD2B, and CHD3, CHD4 and CHD5 define mutually exclusive NuRD complexes. Interacts with CDK2AP1. Interacts with CDK2. Interacts with MAPK1. Post-translationally, phosphorylated by MAPK1 and CDK2. As to expression, ubiquitous.

It localises to the cytoplasm. It is found in the nucleus. Functionally, acts as a component of the histone deacetylase NuRD complex which participates in the remodeling of chromatin. Inhibits cell cycle G1/S phase transition by repressing CDK2 expression and activation; represses CDK2 activation by inhibiting its interaction with cyclin E and A. Plays a role in regulating the self-renewal of embryonic stem cells (ESCs) and in maintaining cell survival during terminal differentiation of ESCs. Regulates microtubule organization of metaphase II oocytes. The polypeptide is Cyclin-dependent kinase 2-associated protein 2 (CDK2AP2) (Homo sapiens (Human)).